A 260-amino-acid chain; its full sequence is Putative ATP-binding protein BruAb2_1123 (260 aa).

The ABC transporter domain occupies 5 to 228 (ISFNNVVMRY…DLPYPRTEAI (224 aa)). 37–44 (GPSGCGKS) is a binding site for ATP.

Belongs to the ABC transporter superfamily. As to quaternary structure, the complex is composed of two ATP-binding proteins (BruAb2_1123), two transmembrane proteins (BruAb2_1124) and a solute-binding protein (BruAb2_1122).

It is found in the cell inner membrane. In terms of biological role, probably part of an ABC transporter complex. Probably Responsible for energy coupling to the transport system. The polypeptide is Putative ATP-binding protein BruAb2_1123 (Brucella abortus biovar 1 (strain 9-941)).